The chain runs to 395 residues: MEKLRKVVNEIAYTRVHTNSPALHRSLVPFLTIASSLYGVALQIRRSLYRYSLLQKHRLPVPVISVGNLSWGGNGKTPMVEYISQFLVDSGLTPLILTRGYAGGDEVKMLERHLRGGPVKIGVGANRAATAALFLDKYGCVDSSSLRSFFDLHERAQVWTISEKIGCIILDDGMQHWSLSRDLEIVMLNGLNPWGNGHLMPHGPLREPLLALERADVAVVHHVDLITKQSLRDIENMIQGFKKSIPIFYSKMVPKYLFDVKNARSHVALEALRCASVLCVSAIGSADAFVKSIEMTGAHYVDRLDFSDHHLFEAEDVETMSRRAKGLEHKSNCKPIIVVTEKDYDRDPEILKCLDSYTVLVLCSELQITPILETDVDSFNYTLMKALAAKFYVSS.

The N-terminal 32 residues, 1–32 (MEKLRKVVNEIAYTRVHTNSPALHRSLVPFLT), are a transit peptide targeting the mitochondrion.

It belongs to the LpxK family.

It localises to the mitochondrion. It catalyses the reaction a lipid A disaccharide + ATP = a lipid IVA + ADP + H(+). The protein operates within glycolipid biosynthesis; lipid IV(A) biosynthesis; lipid IV(A) from (3R)-3-hydroxytetradecanoyl-[acyl-carrier-protein] and UDP-N-acetyl-alpha-D-glucosamine: step 6/6. Involved in the biosynthesis of lipid A, a phosphorylated glycolipid that in bacteria anchors the lipopolysaccharide to the outer membrane of the cell. Transfers the gamma-phosphate of ATP to the 4'-position of a tetraacyldisaccharide 1-phosphate intermediate (termed DS-1-P) to form tetraacyldisaccharide 1,4'-bis-phosphate (lipid IVA). Lipid A-like molecules in plants may serve as structural components of the outer membranes of mitochondria and/or chloroplasts, or may be involved in signal transduction or plant defense responses (Potential). In Arabidopsis thaliana (Mouse-ear cress), this protein is Probable tetraacyldisaccharide 4'-kinase, mitochondrial (LPXK).